The sequence spans 712 residues: Dipeptidyl-peptidase 7 (712 aa).

The first 23 residues, 1–23 (MQMKLKSILLGAALLLGASGVAK), serve as a signal peptide directing secretion. Residue histidine 89 is the Charge relay system of the active site. Residues 136 to 173 (TDKVEGQLKGITDEMERLRKAQEVCQELAKKENADENQ) are a coiled coil. Catalysis depends on charge relay system residues aspartate 225 and serine 648.

Belongs to the peptidase S46 family.

Its subcellular location is the cell outer membrane. Is inhibited in vitro by typical serine protease inhibitors like diisopropyl fluorophosphate, Pefablock, and 3,4-dichloroisocoumarin, but not by typical cysteine class inhibitors such as E-64 or iododoacetic acid. Functionally, catalyzes the removal of dipeptides from the N-terminus of oligopeptides. Shows a broad specificity for both aliphatic and aromatic residues in the P1 position, with glycine or proline being not acceptable in this position. Most potently cleaves the synthetic substrate Met-Leu-methylcoumaryl-7-amide (Met-Leu-MCA), Leu-Arg-MCA and Lys-Ala-MCA to a lesser extent. Is likely involved in amino acid metabolism and bacterial growth of asaccharolytic P.gingivalis, that utilizes amino acids from extracellular proteinaceous nutrients as energy and carbon sources. This Porphyromonas gingivalis (strain ATCC 33277 / DSM 20709 / CIP 103683 / JCM 12257 / NCTC 11834 / 2561) protein is Dipeptidyl-peptidase 7.